The sequence spans 388 residues: Succinate--CoA ligase [ADP-forming] subunit beta (388 aa).

The 236-residue stretch at 9–244 (KQLFAEYGLP…PSQDDAREAH (236 aa)) folds into the ATP-grasp domain. ATP is bound by residues K46, 53–55 (GRG), E99, T102, and E107. Positions 199 and 213 each coordinate Mg(2+). Residues N264 and 321–323 (GIV) each bind substrate.

The protein belongs to the succinate/malate CoA ligase beta subunit family. In terms of assembly, heterotetramer of two alpha and two beta subunits. The cofactor is Mg(2+).

It carries out the reaction succinate + ATP + CoA = succinyl-CoA + ADP + phosphate. The catalysed reaction is GTP + succinate + CoA = succinyl-CoA + GDP + phosphate. It functions in the pathway carbohydrate metabolism; tricarboxylic acid cycle; succinate from succinyl-CoA (ligase route): step 1/1. Functionally, succinyl-CoA synthetase functions in the citric acid cycle (TCA), coupling the hydrolysis of succinyl-CoA to the synthesis of either ATP or GTP and thus represents the only step of substrate-level phosphorylation in the TCA. The beta subunit provides nucleotide specificity of the enzyme and binds the substrate succinate, while the binding sites for coenzyme A and phosphate are found in the alpha subunit. The protein is Succinate--CoA ligase [ADP-forming] subunit beta of Pseudomonas aeruginosa (strain LESB58).